Here is a 137-residue protein sequence, read N- to C-terminus: Golgin subfamily A member 7 (137 aa).

2 S-palmitoyl cysteine lipidation sites follow: Cys-69 and Cys-72.

Belongs to the ERF4 family. Interacts with GOLGA3. Interacts with ZDHHC9. Post-translationally, palmitoylated on Cys-69 and Cys-72; which is required for Golgi localization and interaction with GOLGA3.

It is found in the golgi apparatus membrane. Functionally, may be involved in protein transport from Golgi to cell surface. The ZDHHC9-GOLGA7 complex is a palmitoyltransferase specific for HRAS and NRAS. The chain is Golgin subfamily A member 7 (Golga7) from Rattus norvegicus (Rat).